The primary structure comprises 269 residues: 2-keto-4-pentenoate hydratase (269 aa).

It belongs to the hydratase/decarboxylase family. MhpD subfamily. A divalent metal cation is required as a cofactor.

The catalysed reaction is (S)-4-hydroxy-2-oxopentanoate = (2Z)-2-hydroxypenta-2,4-dienoate + H2O. It functions in the pathway aromatic compound metabolism; 3-phenylpropanoate degradation. In terms of biological role, catalyzes the conversion of 2-hydroxypentadienoic acid (enolic form of 2-oxopent-4-enoate) to 4-hydroxy-2-ketopentanoic acid. The polypeptide is 2-keto-4-pentenoate hydratase (Paraburkholderia xenovorans (strain LB400)).